The chain runs to 121 residues: MQIKNFPFLFLLNSLIIFSCSTIASLPEEPSSPQESTLKALSLYEAHLSSYIMYLQTFLVKTKQKVNNKNYPEFTLFDTSKLKKDQTLKSIKTNIAALKNHIDKIKPIAMQIYKKYSKNIP.

A signal peptide spans 1 to 19; sequence MQIKNFPFLFLLNSLIIFS. A lipid anchor (N-palmitoyl cysteine) is attached at cysteine 20. Cysteine 20 carries the S-diacylglycerol cysteine lipid modification.

It is found in the cell outer membrane. Functionally, outer membrane lipoprotein that could act as a component of a potential toxin-antitoxin system in B.burgdorferi which could serve as a plasmid stabilization mechanism in a growing bacterial population. This Borreliella burgdorferi (strain ATCC 35210 / DSM 4680 / CIP 102532 / B31) (Borrelia burgdorferi) protein is Outer membrane lipoprotein BBA14.